Consider the following 638-residue polypeptide: Sorting nexin-41 (638 aa).

Over residues 1 to 14 (MDSDTSPNPFASSP) the composition is skewed to low complexity. The tract at residues 1–69 (MDSDTSPNPF…MGATVPGPKP (69 aa)) is disordered. A compositionally biased stretch (pro residues) spans 15 to 30 (PSSPSPRPSLPPPVPR). The region spanning 84 to 201 (GEQVHIVDAL…HRFLEEDVSW (118 aa)) is the PX domain. R118, S120, K144, and R168 together coordinate a 1,2-diacyl-sn-glycero-3-phospho-(1D-myo-inositol-3-phosphate). 3 disordered regions span residues 215 to 239 (KNPL…SEAP), 408 to 432 (LERG…RERA), and 545 to 638 (PHPN…LGPL). A compositionally biased stretch (low complexity) spans 225–239 (PTFQPTTPTSPSEAP). The span at 423 to 432 (EAARDERERA) shows a compositional bias: basic and acidic residues. The segment covering 552-562 (QTQTQVQSQQS) has biased composition (low complexity). The segment covering 585-601 (MKNEIERVEIEIADKPL) has biased composition (basic and acidic residues).

The protein belongs to the sorting nexin family.

It localises to the endosome membrane. Its subcellular location is the endomembrane system. Its function is as follows. May be required for cytoplasm to vacuole transport (Cvt) and pexophagy. The sequence is that of Sorting nexin-41 (SNX41) from Cryptococcus neoformans var. neoformans serotype D (strain B-3501A) (Filobasidiella neoformans).